The primary structure comprises 66 residues: Clarkitoxin-1 (66 aa).

Intrachain disulfides connect Cys3/Cys24, Cys17/Cys42, Cys46/Cys59, and Cys60/Cys65.

Expressed by the venom gland.

Its subcellular location is the secreted. Not toxic to mice when injected intravenously or intraperitoneally. The polypeptide is Clarkitoxin-1 (Micrurus clarki (Clark's coral snake)).